The sequence spans 530 residues: Inactive ubiquitin carboxyl-terminal hydrolase 17-like protein 7 (530 aa).

Residues 80 to 375 enclose the USP domain; sequence AGLQKIGNTF…QAYVLFYIQK (296 aa). Residues 382–392 show a composition bias toward basic and acidic residues; sequence SESVSRGREPR. Disordered regions lie at residues 382–412, 431–454, and 490–530; these read SESV…KRDH, ESTL…NVRK, and SSTK…LVCQ. Residues 490–512 are compositionally biased toward polar residues; the sequence is SSTKPTDQESMNTGTLASLQGST. Positions 513–524 are enriched in basic residues; that stretch reads RRSKGNNKHSKR.

This sequence belongs to the peptidase C19 family. USP17 subfamily.

The protein localises to the nucleus. Its subcellular location is the endoplasmic reticulum. In Homo sapiens (Human), this protein is Inactive ubiquitin carboxyl-terminal hydrolase 17-like protein 7 (USP17L7).